The sequence spans 184 residues: Guanylate kinase (184 aa).

In terms of domain architecture, Guanylate kinase-like spans 5–183; the sequence is KKLIILTGPS…TAKRIIKLIQ (179 aa). 12–19 is an ATP binding site; sequence GPSGVGKG.

This sequence belongs to the guanylate kinase family.

The protein resides in the cytoplasm. It catalyses the reaction GMP + ATP = GDP + ADP. Functionally, essential for recycling GMP and indirectly, cGMP. The chain is Guanylate kinase from Prochlorococcus marinus (strain MIT 9312).